We begin with the raw amino-acid sequence, 150 residues long: Endoribonuclease YbeY (150 aa).

The Zn(2+) site is built by His112, His116, and His122.

The protein belongs to the endoribonuclease YbeY family. Requires Zn(2+) as cofactor.

The protein resides in the cytoplasm. In terms of biological role, single strand-specific metallo-endoribonuclease involved in late-stage 70S ribosome quality control and in maturation of the 3' terminus of the 16S rRNA. In Geobacter sulfurreducens (strain ATCC 51573 / DSM 12127 / PCA), this protein is Endoribonuclease YbeY.